Reading from the N-terminus, the 360-residue chain is Phospho-N-acetylmuramoyl-pentapeptide-transferase (360 aa).

Helical transmembrane passes span 24-44, 69-89, 92-112, 133-153, 158-178, 199-219, 239-259, 263-283, 288-308, and 337-357; these read RAVM…PWTI, GTPT…TLLW, WANP…ALGF, MVWQ…LAAN, ILIV…GFLV, GLAT…AYAS, VVIF…FNAY, VFMG…VAVI, FVLV…MLQV, and QVVV…LSTL.

Belongs to the glycosyltransferase 4 family. MraY subfamily. It depends on Mg(2+) as a cofactor.

Its subcellular location is the cell inner membrane. It catalyses the reaction UDP-N-acetyl-alpha-D-muramoyl-L-alanyl-gamma-D-glutamyl-meso-2,6-diaminopimeloyl-D-alanyl-D-alanine + di-trans,octa-cis-undecaprenyl phosphate = di-trans,octa-cis-undecaprenyl diphospho-N-acetyl-alpha-D-muramoyl-L-alanyl-D-glutamyl-meso-2,6-diaminopimeloyl-D-alanyl-D-alanine + UMP. It participates in cell wall biogenesis; peptidoglycan biosynthesis. In terms of biological role, catalyzes the initial step of the lipid cycle reactions in the biosynthesis of the cell wall peptidoglycan: transfers peptidoglycan precursor phospho-MurNAc-pentapeptide from UDP-MurNAc-pentapeptide onto the lipid carrier undecaprenyl phosphate, yielding undecaprenyl-pyrophosphoryl-MurNAc-pentapeptide, known as lipid I. This Neisseria meningitidis serogroup C / serotype 2a (strain ATCC 700532 / DSM 15464 / FAM18) protein is Phospho-N-acetylmuramoyl-pentapeptide-transferase.